Here is a 205-residue protein sequence, read N- to C-terminus: Histidine biosynthesis bifunctional protein HisIE (205 aa).

The phosphoribosyl-AMP cyclohydrolase stretch occupies residues 1–115 (MIDIKELKFD…DEETEDGIEI (115 aa)). Residues 116–205 (LNKLYERIKG…YNELERRYKK (90 aa)) are phosphoribosyl-ATP pyrophosphohydrolase.

In the N-terminal section; belongs to the PRA-CH family. It in the C-terminal section; belongs to the PRA-PH family.

It localises to the cytoplasm. It catalyses the reaction 1-(5-phospho-beta-D-ribosyl)-ATP + H2O = 1-(5-phospho-beta-D-ribosyl)-5'-AMP + diphosphate + H(+). The catalysed reaction is 1-(5-phospho-beta-D-ribosyl)-5'-AMP + H2O = 1-(5-phospho-beta-D-ribosyl)-5-[(5-phospho-beta-D-ribosylamino)methylideneamino]imidazole-4-carboxamide. The protein operates within amino-acid biosynthesis; L-histidine biosynthesis; L-histidine from 5-phospho-alpha-D-ribose 1-diphosphate: step 2/9. It functions in the pathway amino-acid biosynthesis; L-histidine biosynthesis; L-histidine from 5-phospho-alpha-D-ribose 1-diphosphate: step 3/9. The polypeptide is Histidine biosynthesis bifunctional protein HisIE (Caldanaerobacter subterraneus subsp. tengcongensis (strain DSM 15242 / JCM 11007 / NBRC 100824 / MB4) (Thermoanaerobacter tengcongensis)).